We begin with the raw amino-acid sequence, 88 residues long: Small ribosomal subunit protein bS20 (88 aa).

Residues 1–25 (MANTAQALKRIRQTNKARAQNASQR) form a disordered region. Residues 16-25 (KARAQNASQR) are compositionally biased toward polar residues.

This sequence belongs to the bacterial ribosomal protein bS20 family.

Its function is as follows. Binds directly to 16S ribosomal RNA. The protein is Small ribosomal subunit protein bS20 of Dichelobacter nodosus (strain VCS1703A).